The primary structure comprises 563 residues: Phosphomethylpyrimidine synthase (563 aa).

Residues 95 to 115 (PGKNPSPMNNRTPVRAKQGKS) form a disordered region. Substrate-binding positions include N200, M229, Y258, H294, 314–316 (SRG), 355–358 (DALR), and E394. Residue H398 participates in Zn(2+) binding. Y421 is a binding site for substrate. H462 contacts Zn(2+). 3 residues coordinate [4Fe-4S] cluster: C544, C547, and C552.

It belongs to the ThiC family. The cofactor is [4Fe-4S] cluster.

The catalysed reaction is 5-amino-1-(5-phospho-beta-D-ribosyl)imidazole + S-adenosyl-L-methionine = 4-amino-2-methyl-5-(phosphooxymethyl)pyrimidine + CO + 5'-deoxyadenosine + formate + L-methionine + 3 H(+). It participates in cofactor biosynthesis; thiamine diphosphate biosynthesis. Catalyzes the synthesis of the hydroxymethylpyrimidine phosphate (HMP-P) moiety of thiamine from aminoimidazole ribotide (AIR) in a radical S-adenosyl-L-methionine (SAM)-dependent reaction. In Chlorobium phaeobacteroides (strain BS1), this protein is Phosphomethylpyrimidine synthase.